A 247-amino-acid polypeptide reads, in one-letter code: uncharacterized protein (247 aa).

Residues 200–225 (SGKYSELKTKVNDIENDLRTLSSNTN) are a coiled coil.

This is an uncharacterized protein from Acanthamoeba polyphaga (Amoeba).